Consider the following 154-residue polypeptide: 3-hydroxyacyl-[acyl-carrier-protein] dehydratase FabZ (154 aa).

His-58 is an active-site residue.

This sequence belongs to the thioester dehydratase family. FabZ subfamily.

It localises to the cytoplasm. The enzyme catalyses a (3R)-hydroxyacyl-[ACP] = a (2E)-enoyl-[ACP] + H2O. Involved in unsaturated fatty acids biosynthesis. Catalyzes the dehydration of short chain beta-hydroxyacyl-ACPs and long chain saturated and unsaturated beta-hydroxyacyl-ACPs. This is 3-hydroxyacyl-[acyl-carrier-protein] dehydratase FabZ from Protochlamydia amoebophila (strain UWE25).